The primary structure comprises 337 residues: Mannan polymerase complex subunit mnn9 (337 aa).

Residues 1–8 (MRVYNKSR) are Cytoplasmic-facing. Residues 9 to 29 (IVGQLLFVALGITFIYYLFTP) traverse the membrane as a helical; Signal-anchor for type II membrane protein segment. At 30 to 337 (SVNSNAKVQI…PYYLVFHHNE (308 aa)) the chain is on the lumenal side.

It belongs to the ANP1/MMN9/VAN1 family.

It is found in the endoplasmic reticulum membrane. The protein resides in the golgi apparatus membrane. It functions in the pathway protein modification; protein glycosylation. In terms of biological role, required for the addition of the long alpha 1,6-mannose backbone of N-linked glycans on cell wall and periplasmic proteins. The protein is Mannan polymerase complex subunit mnn9 of Schizosaccharomyces pombe (strain 972 / ATCC 24843) (Fission yeast).